The following is a 363-amino-acid chain: Dihydroorotate dehydrogenase (quinone) (363 aa).

Residues 62–66 (AGFDK) and Thr86 contribute to the FMN site. Lys66 provides a ligand contact to substrate. Residue 111-115 (NRMGF) coordinates substrate. The FMN site is built by Asn142 and Asn175. A substrate-binding site is contributed by Asn175. Ser178 functions as the Nucleophile in the catalytic mechanism. Asn180 contributes to the substrate binding site. FMN-binding residues include Lys216 and Thr244. 245–246 (NT) contributes to the substrate binding site. FMN contacts are provided by residues Gly267, Gly296, and 317–318 (YT).

This sequence belongs to the dihydroorotate dehydrogenase family. Type 2 subfamily. Monomer. It depends on FMN as a cofactor.

It localises to the cell membrane. It catalyses the reaction (S)-dihydroorotate + a quinone = orotate + a quinol. It functions in the pathway pyrimidine metabolism; UMP biosynthesis via de novo pathway; orotate from (S)-dihydroorotate (quinone route): step 1/1. Its function is as follows. Catalyzes the conversion of dihydroorotate to orotate with quinone as electron acceptor. In Anaeromyxobacter sp. (strain Fw109-5), this protein is Dihydroorotate dehydrogenase (quinone).